The chain runs to 83 residues: MAVNVFTILQLAVFAAIVLNVNLHSVSADSKGTSDSQDSTKSIKVDFCETNCTKTDGGWTGCTGDCICVSVGDSIEGRCMDFG.

The first 28 residues, 1 to 28, serve as a signal peptide directing secretion; it reads MAVNVFTILQLAVFAAIVLNVNLHSVSA. Disulfide bonds link Cys-48-Cys-66, Cys-52-Cys-68, and Cys-62-Cys-79. N-linked (GlcNAc...) asparagine glycosylation is present at Asn-51.

It localises to the secreted. Its function is as follows. Salivary chemokine-binding protein which binds to host chemokines CXCL1, CXCL2, CXCL3, CXCL5, CXCL6, CXCL12 and CXCL13. The protein is Evasin P1124 of Ixodes ricinus (Common tick).